Reading from the N-terminus, the 93-residue chain is Large ribosomal subunit protein uL23cz/uL23cy (93 aa).

Belongs to the universal ribosomal protein uL23 family. In terms of assembly, part of the 50S ribosomal subunit.

The protein localises to the plastid. The protein resides in the chloroplast. In terms of biological role, binds to 23S rRNA. The sequence is that of Large ribosomal subunit protein uL23cz/uL23cy (rpl23-A) from Helianthus annuus (Common sunflower).